The chain runs to 455 residues: Kynurenine 3-monooxygenase (455 aa).

It belongs to the aromatic-ring hydroxylase family. KMO subfamily. The cofactor is FAD.

It catalyses the reaction L-kynurenine + NADPH + O2 + H(+) = 3-hydroxy-L-kynurenine + NADP(+) + H2O. The protein operates within cofactor biosynthesis; NAD(+) biosynthesis; quinolinate from L-kynurenine: step 1/3. Catalyzes the hydroxylation of L-kynurenine (L-Kyn) to form 3-hydroxy-L-kynurenine (L-3OHKyn). Required for synthesis of quinolinic acid. This Xanthomonas oryzae pv. oryzae (strain MAFF 311018) protein is Kynurenine 3-monooxygenase.